A 159-amino-acid chain; its full sequence is Transcription antitermination protein NusB (159 aa).

This sequence belongs to the NusB family.

Its function is as follows. Involved in transcription antitermination. Required for transcription of ribosomal RNA (rRNA) genes. Binds specifically to the boxA antiterminator sequence of the ribosomal RNA (rrn) operons. This chain is Transcription antitermination protein NusB, found in Stenotrophomonas maltophilia (strain K279a).